The sequence spans 586 residues: Envelope glycoprotein (586 aa).

The signal sequence occupies residues Met-1 to Ala-22. Residues Gly-23 to Val-526 are Extracellular-facing. N-linked (GlcNAc...) asparagine; by host glycans are attached at residues Asn-120 and Asn-237. Residues Cys-247–Cys-250 carry the CXXC motif. 3 cysteine pairs are disulfide-bonded: Cys-247-Cys-250, Cys-247-Cys-483, and Cys-475-Cys-482. N-linked (GlcNAc...) asparagine; by host glycans are attached at residues Asn-264, Asn-276, Asn-291, Asn-304, Asn-318, Asn-324, Asn-339, and Asn-357. Positions Leu-398–Leu-418 are fusion peptide. Coiled-coil stretches lie at residues Gly-419–Ala-469 and Gln-479–Phe-515. The immunosuppression stretch occupies residues Leu-458–Ile-474. Residues Cys-475–Cys-483 carry the CX6CC motif. A glycan (N-linked (GlcNAc...) asparagine; by host) is linked at Asn-487. Residues Met-527 to Phe-547 form a helical membrane-spanning segment. The Cytoplasmic portion of the chain corresponds to Asn-548–Thr-586. The short motif at Tyr-570–Leu-573 is the YXXL motif; contains endocytosis signal element.

The mature envelope protein (Env) consists of a trimer of SU-TM heterodimers attached by a labile interchain disulfide bond. In terms of processing, specific enzymatic cleavages in vivo yield mature proteins. Envelope glycoproteins are synthesized as an inactive precursor that is N-glycosylated and processed likely by host cell furin or by a furin-like protease in the Golgi to yield the mature SU and TM proteins. The cleavage site between SU and TM requires the minimal sequence [KR]-X-[KR]-R. The R-peptide is released from the C-terminus of the cytoplasmic tail of the TM protein upon particle formation as a result of proteolytic cleavage by the viral protease. Cleavage of this peptide is required for TM to become fusogenic. The CXXC motif is highly conserved across a broad range of retroviral envelope proteins. It is thought to participate in the formation of a labile disulfide bond possibly with the CX6CC motif present in the transmembrane protein. Isomerization of the intersubunit disulfide bond to an SU intrachain disulfide bond is thought to occur upon receptor recognition in order to allow membrane fusion.

The protein localises to the virion membrane. It is found in the host cell membrane. Its function is as follows. The surface protein (SU) attaches the virus to the host cell by binding to its receptor. This interaction triggers the refolding of the transmembrane protein (TM) and is thought to activate its fusogenic potential by unmasking its fusion peptide. Fusion occurs at the host cell plasma membrane. In terms of biological role, the transmembrane protein (TM) acts as a class I viral fusion protein. Under the current model, the protein has at least 3 conformational states: pre-fusion native state, pre-hairpin intermediate state, and post-fusion hairpin state. During viral and target cell membrane fusion, the coiled coil regions (heptad repeats) assume a trimer-of-hairpins structure, positioning the fusion peptide in close proximity to the C-terminal region of the ectodomain. The formation of this structure appears to drive apposition and subsequent fusion of viral and target cell membranes. Membranes fusion leads to delivery of the nucleocapsid into the cytoplasm. This chain is Envelope glycoprotein (env), found in Mason-Pfizer monkey virus (MPMV).